The following is an 842-amino-acid chain: Glycogen phosphorylase, muscle form (842 aa).

Serine 2 is subject to N-acetylserine. Serine 15 is modified (phosphoserine; by PHK; in form phosphorylase A). Positions 43 and 76 each coordinate AMP. Tyrosine 204 and tyrosine 227 each carry phosphotyrosine. AMP is bound at residue 310-319; that stretch reads RRFKSSKFGC. A Phosphoserine modification is found at serine 430. Tyrosine 473 is modified (phosphotyrosine). An N6-(pyridoxal phosphate)lysine modification is found at lysine 681. Phosphoserine occurs at positions 747 and 748.

It belongs to the glycogen phosphorylase family. In terms of assembly, homodimer. Homotetramer; to form the enzymatically active phosphorylase A. It depends on pyridoxal 5'-phosphate as a cofactor. Post-translationally, phosphorylation of Ser-15 converts phosphorylase B (unphosphorylated) to phosphorylase A.

The catalysed reaction is [(1-&gt;4)-alpha-D-glucosyl](n) + phosphate = [(1-&gt;4)-alpha-D-glucosyl](n-1) + alpha-D-glucose 1-phosphate. Allosterically regulated through the non-covalent binding of metabolites, being activated by AMP and inhibited by ATP, ADP, and glucose-6-phosphate. The activity is also controlled by post-translational modifications including phosphorylation. Functionally, allosteric enzyme that catalyzes the rate-limiting step in glycogen catabolism, the phosphorolytic cleavage of glycogen to produce glucose-1-phosphate, and plays a central role in maintaining cellular and organismal glucose homeostasis. This is Glycogen phosphorylase, muscle form from Ovis aries (Sheep).